We begin with the raw amino-acid sequence, 279 residues long: Thymidylate synthase (279 aa).

133 to 134 (RR) contributes to the dUMP binding site. Cysteine 154 (nucleophile) is an active-site residue. DUMP contacts are provided by residues 178-181 (RSND), asparagine 189, and 219-221 (HIY). Aspartate 181 lines the (6R)-5,10-methylene-5,6,7,8-tetrahydrofolate pocket. Residue alanine 278 coordinates (6R)-5,10-methylene-5,6,7,8-tetrahydrofolate.

This sequence belongs to the thymidylate synthase family. Bacterial-type ThyA subfamily. As to quaternary structure, homodimer.

The protein localises to the cytoplasm. The catalysed reaction is dUMP + (6R)-5,10-methylene-5,6,7,8-tetrahydrofolate = 7,8-dihydrofolate + dTMP. Its pathway is pyrimidine metabolism; dTTP biosynthesis. Functionally, catalyzes the reductive methylation of 2'-deoxyuridine-5'-monophosphate (dUMP) to 2'-deoxythymidine-5'-monophosphate (dTMP) while utilizing 5,10-methylenetetrahydrofolate (mTHF) as the methyl donor and reductant in the reaction, yielding dihydrofolate (DHF) as a by-product. This enzymatic reaction provides an intracellular de novo source of dTMP, an essential precursor for DNA biosynthesis. The chain is Thymidylate synthase from Streptococcus agalactiae serotype Ia (strain ATCC 27591 / A909 / CDC SS700).